Here is a 313-residue protein sequence, read N- to C-terminus: Ribosomal RNA small subunit methyltransferase H (313 aa).

S-adenosyl-L-methionine-binding positions include 35 to 37, Asp-55, Phe-79, Asp-101, and Gln-108; that span reads GGH.

This sequence belongs to the methyltransferase superfamily. RsmH family.

The protein resides in the cytoplasm. The catalysed reaction is cytidine(1402) in 16S rRNA + S-adenosyl-L-methionine = N(4)-methylcytidine(1402) in 16S rRNA + S-adenosyl-L-homocysteine + H(+). In terms of biological role, specifically methylates the N4 position of cytidine in position 1402 (C1402) of 16S rRNA. The protein is Ribosomal RNA small subunit methyltransferase H of Enterobacter sp. (strain 638).